The sequence spans 152 residues: Superoxide dismutase [Cu-Zn] 4AP (152 aa).

Positions 45, 47, and 62 each coordinate Cu cation. C56 and C145 are disulfide-bonded. H62, H70, H79, and D82 together coordinate Zn(2+). Position 119 (H119) interacts with Cu cation.

The protein belongs to the Cu-Zn superoxide dismutase family. As to quaternary structure, homodimer. It depends on Cu cation as a cofactor. Requires Zn(2+) as cofactor.

It localises to the cytoplasm. The catalysed reaction is 2 superoxide + 2 H(+) = H2O2 + O2. Functionally, destroys radicals which are normally produced within the cells and which are toxic to biological systems. This Zea mays (Maize) protein is Superoxide dismutase [Cu-Zn] 4AP (SODCC.2).